The following is a 483-amino-acid chain: Protein nucleotidyltransferase YdiU (483 aa).

The ATP site is built by Gly100, Gly102, Arg103, Lys123, Asp135, Gly136, Arg189, and Arg196. The active-site Proton acceptor is the Asp265. Positions 266 and 275 each coordinate Mg(2+). Asp275 contributes to the ATP binding site.

Belongs to the SELO family. Mg(2+) is required as a cofactor. It depends on Mn(2+) as a cofactor.

The catalysed reaction is L-seryl-[protein] + ATP = 3-O-(5'-adenylyl)-L-seryl-[protein] + diphosphate. It catalyses the reaction L-threonyl-[protein] + ATP = 3-O-(5'-adenylyl)-L-threonyl-[protein] + diphosphate. It carries out the reaction L-tyrosyl-[protein] + ATP = O-(5'-adenylyl)-L-tyrosyl-[protein] + diphosphate. The enzyme catalyses L-histidyl-[protein] + UTP = N(tele)-(5'-uridylyl)-L-histidyl-[protein] + diphosphate. The catalysed reaction is L-seryl-[protein] + UTP = O-(5'-uridylyl)-L-seryl-[protein] + diphosphate. It catalyses the reaction L-tyrosyl-[protein] + UTP = O-(5'-uridylyl)-L-tyrosyl-[protein] + diphosphate. Functionally, nucleotidyltransferase involved in the post-translational modification of proteins. It can catalyze the addition of adenosine monophosphate (AMP) or uridine monophosphate (UMP) to a protein, resulting in modifications known as AMPylation and UMPylation. This chain is Protein nucleotidyltransferase YdiU, found in Gloeobacter violaceus (strain ATCC 29082 / PCC 7421).